Reading from the N-terminus, the 401-residue chain is E3 ubiquitin-protein ligase NHLRC1 (401 aa).

The segment at 28-74 (CKVCFERFGHWQQRRPRNLPCGHVVCLACVAALAHPRTLGLECPFCR) adopts an RING-type zinc-finger fold. NHL repeat units lie at residues 115–159 (TLTC…FDSG), 163–206 (AHQF…FDFF), 207–247 (GQIK…LEAD), 250–303 (EGVL…FNST), 304–352 (MQLI…LGKP), and 353–396 (EEFP…FKVM).

Interacts with AGL. Interacts (via the NHL repeats) with EPM2A/laforin. Forms a complex with EPM2A/laforin and HSP70. Interacts with PRDM8.

It is found in the endoplasmic reticulum. It localises to the nucleus. It carries out the reaction S-ubiquitinyl-[E2 ubiquitin-conjugating enzyme]-L-cysteine + [acceptor protein]-L-lysine = [E2 ubiquitin-conjugating enzyme]-L-cysteine + N(6)-ubiquitinyl-[acceptor protein]-L-lysine.. Its pathway is protein modification; protein ubiquitination. Its function is as follows. E3 ubiquitin-protein ligase. Together with the phosphatase EPM2A/laforin, appears to be involved in the clearance of toxic polyglucosan and protein aggregates via multiple pathways. In complex with EPM2A/laforin and HSP70, suppresses the cellular toxicity of misfolded proteins by promoting their degradation through the ubiquitin-proteasome system (UPS). Ubiquitinates the glycogen-targeting protein phosphatase subunits PPP1R3C/PTG and PPP1R3D in a laforin-dependent manner and targets them for proteasome-dependent degradation, thus decreasing glycogen accumulation. Polyubiquitinates EPM2A/laforin and ubiquitinates AGL and targets them for proteasome-dependent degradation. Also promotes proteasome-independent protein degradation through the macroautophagy pathway. The sequence is that of E3 ubiquitin-protein ligase NHLRC1 (Nhlrc1) from Mus musculus (Mouse).